The primary structure comprises 24 residues: Brevinin-1Ba (24 aa).

Cysteines 18 and 24 form a disulfide.

In terms of tissue distribution, expressed by the skin glands.

It is found in the secreted. Antibacterial activity against Gram-positive bacterium S.aureus. The sequence is that of Brevinin-1Ba from Lithobates berlandieri (Rio Grande leopard frog).